The chain runs to 250 residues: Ubiquinone/menaquinone biosynthesis C-methyltransferase UbiE (250 aa).

Residues T73, D94, N122–A123, and S139 each bind S-adenosyl-L-methionine.

This sequence belongs to the class I-like SAM-binding methyltransferase superfamily. MenG/UbiE family.

The enzyme catalyses a 2-demethylmenaquinol + S-adenosyl-L-methionine = a menaquinol + S-adenosyl-L-homocysteine + H(+). The catalysed reaction is a 2-methoxy-6-(all-trans-polyprenyl)benzene-1,4-diol + S-adenosyl-L-methionine = a 5-methoxy-2-methyl-3-(all-trans-polyprenyl)benzene-1,4-diol + S-adenosyl-L-homocysteine + H(+). The protein operates within quinol/quinone metabolism; menaquinone biosynthesis; menaquinol from 1,4-dihydroxy-2-naphthoate: step 2/2. Its pathway is cofactor biosynthesis; ubiquinone biosynthesis. Methyltransferase required for the conversion of demethylmenaquinol (DMKH2) to menaquinol (MKH2) and the conversion of 2-polyprenyl-6-methoxy-1,4-benzoquinol (DDMQH2) to 2-polyprenyl-3-methyl-6-methoxy-1,4-benzoquinol (DMQH2). The sequence is that of Ubiquinone/menaquinone biosynthesis C-methyltransferase UbiE from Francisella tularensis subsp. holarctica (strain FTNF002-00 / FTA).